The sequence spans 33 residues: Brevinin-2E (33 aa).

Cys27 and Cys33 are disulfide-bonded.

The protein belongs to the frog skin active peptide (FSAP) family. Brevinin subfamily. In terms of tissue distribution, expressed by the skin glands.

It localises to the secreted. Shows antibacterial activity against representative Gram-negative and Gram-positive bacterial species, and hemolytic activity. The sequence is that of Brevinin-2E from Pelophylax lessonae (Pool frog).